A 368-amino-acid chain; its full sequence is Chorismate synthase (368 aa).

Residue Arg-46 participates in NADP(+) binding. FMN-binding positions include 124-126 (RAS), Gly-284, 299-303 (KPTPS), and Arg-326.

It belongs to the chorismate synthase family. FMNH2 is required as a cofactor.

It catalyses the reaction 5-O-(1-carboxyvinyl)-3-phosphoshikimate = chorismate + phosphate. The protein operates within metabolic intermediate biosynthesis; chorismate biosynthesis; chorismate from D-erythrose 4-phosphate and phosphoenolpyruvate: step 7/7. Its function is as follows. Catalyzes the anti-1,4-elimination of the C-3 phosphate and the C-6 proR hydrogen from 5-enolpyruvylshikimate-3-phosphate (EPSP) to yield chorismate, which is the branch point compound that serves as the starting substrate for the three terminal pathways of aromatic amino acid biosynthesis. This reaction introduces a second double bond into the aromatic ring system. The polypeptide is Chorismate synthase (Pyrobaculum arsenaticum (strain DSM 13514 / JCM 11321 / PZ6)).